The chain runs to 412 residues: Class E basic helix-loop-helix protein 40 (412 aa).

An essential for interaction with BMAL1, E-box binding and repressor activity against the CLOCK-BMAL1 heterodimer region spans residues 1–139; sequence MERIPSAQPP…LSGRNVETGQ (139 aa). One can recognise a bHLH domain in the interval 52–107; it reads TYKLPHRLIEKKRRDRINECIAQLKDLLPEHLKLTTLGHLEKAVVLELTLKHVKAL. The necessary for interaction with RXRA and repressor activity against RXRA stretch occupies residues 75 to 79; sequence LKDLL. The Orange domain occupies 142–175; sequence FCSGFQTCAREVLQYLAKHENTRDLKSSQLVTHL. A Glycyl lysine isopeptide (Lys-Gly) (interchain with G-Cter in SUMO1, SUMO2 and SUMO3) cross-link involves residue lysine 159. A Glycyl lysine isopeptide (Lys-Gly) (interchain with G-Cter in SUMO2) cross-link involves residue lysine 167. The interval 182 to 303 is disordered; that stretch reads LLQGGTSRKP…LSDDEGHFTS (122 aa). A Phosphoserine modification is found at serine 235. Residues 248 to 271 show a composition bias toward basic and acidic residues; the sequence is ESEKGDLRSEQPCFKSDHGRRFTM. Residue lysine 279 forms a Glycyl lysine isopeptide (Lys-Gly) (interchain with G-Cter in SUMO1); alternate linkage. Lysine 279 participates in a covalent cross-link: Glycyl lysine isopeptide (Lys-Gly) (interchain with G-Cter in SUMO1, SUMO2 and SUMO3); alternate. Residue lysine 279 forms a Glycyl lysine isopeptide (Lys-Gly) (interchain with G-Cter in SUMO2); alternate linkage. Lysine 288 participates in a covalent cross-link: Glycyl lysine isopeptide (Lys-Gly) (interchain with G-Cter in SUMO2). At serine 383 the chain carries Phosphoserine.

In terms of assembly, homodimer. Heterodimer with BHLHE41/DEC2. Interacts with TCF3/E47. Interacts with ubiquitin-conjugating enzyme UBE2I/UBC9. Interacts with HDAC1, SUMO1, RXRA and BMAL1. In terms of processing, ubiquitinated; which may lead to proteasomal degradation. Sumoylation inhibits its ubiquitination and promotes its negative regulation of the CLOCK-BMAL1 heterodimer transcriptional activator activity. As to expression, expressed in cartilage, spleen, intestine, lung, and to a lesser extent in heart, brain, liver, muscle and stomach.

The protein resides in the cytoplasm. The protein localises to the nucleus. Transcriptional repressor involved in the regulation of the circadian rhythm by negatively regulating the activity of the clock genes and clock-controlled genes. Acts as the negative limb of a novel autoregulatory feedback loop (DEC loop) which differs from the one formed by the PER and CRY transcriptional repressors (PER/CRY loop). Both these loops are interlocked as it represses the expression of PER1/2 and in turn is repressed by PER1/2 and CRY1/2. Represses the activity of the circadian transcriptional activator: CLOCK-BMAL1|BMAL2 heterodimer by competing for the binding to E-box elements (5'-CACGTG-3') found within the promoters of its target genes. Negatively regulates its own expression and the expression of DBP and BHLHE41/DEC2. Acts as a corepressor of RXR and the RXR-LXR heterodimers and represses the ligand-induced RXRA and NR1H3/LXRA transactivation activity. May be involved in the regulation of chondrocyte differentiation via the cAMP pathway. Represses the transcription of NR0B2 and attentuates the transactivation of NR0B2 by the CLOCK-BMAL1 complex. Drives the circadian rhythm of blood pressure through transcriptional repression of ATP1B1 in the cardiovascular system. The sequence is that of Class E basic helix-loop-helix protein 40 (BHLHE40) from Homo sapiens (Human).